Reading from the N-terminus, the 398-residue chain is tRNA-specific 2-thiouridylase MnmA (398 aa).

Residues 20-27 and Leu-46 each bind ATP; that span reads AMSGGVDS. The active-site Nucleophile is the Cys-114. Cys-114 and Cys-210 are oxidised to a cystine. Gly-138 serves as a coordination point for ATP. An interaction with tRNA region spans residues 160–162; sequence RDQ. Cys-210 serves as the catalytic Cysteine persulfide intermediate.

Belongs to the MnmA/TRMU family.

The protein localises to the cytoplasm. The catalysed reaction is S-sulfanyl-L-cysteinyl-[protein] + uridine(34) in tRNA + AH2 + ATP = 2-thiouridine(34) in tRNA + L-cysteinyl-[protein] + A + AMP + diphosphate + H(+). Its function is as follows. Catalyzes the 2-thiolation of uridine at the wobble position (U34) of tRNA, leading to the formation of s(2)U34. The chain is tRNA-specific 2-thiouridylase MnmA from Brucella suis (strain ATCC 23445 / NCTC 10510).